Reading from the N-terminus, the 387-residue chain is Anhydro-N-acetylmuramic acid kinase (387 aa).

ATP is bound at residue 17–24 (GTSMDGVD).

Belongs to the anhydro-N-acetylmuramic acid kinase family.

It carries out the reaction 1,6-anhydro-N-acetyl-beta-muramate + ATP + H2O = N-acetyl-D-muramate 6-phosphate + ADP + H(+). It participates in amino-sugar metabolism; 1,6-anhydro-N-acetylmuramate degradation. Its pathway is cell wall biogenesis; peptidoglycan recycling. In terms of biological role, catalyzes the specific phosphorylation of 1,6-anhydro-N-acetylmuramic acid (anhMurNAc) with the simultaneous cleavage of the 1,6-anhydro ring, generating MurNAc-6-P. Is required for the utilization of anhMurNAc either imported from the medium or derived from its own cell wall murein, and thus plays a role in cell wall recycling. This chain is Anhydro-N-acetylmuramic acid kinase, found in Burkholderia pseudomallei (strain 1710b).